A 71-amino-acid chain; its full sequence is DNA-directed RNA polymerases II, IV and V subunit 10 (71 aa).

Zn(2+) contacts are provided by C7, C10, C44, and C45.

This sequence belongs to the archaeal Rpo10/eukaryotic RPB10 RNA polymerase subunit family. Component of the RNA polymerase II, IV and V complexes. Interacts with NRPD1.

Its subcellular location is the nucleus. In terms of biological role, DNA-dependent RNA polymerase catalyzes the transcription of DNA into RNA using the four ribonucleoside triphosphates as substrates. Component of RNA polymerase II which synthesizes mRNA precursors and many functional non-coding RNAs. Pol II is the central component of the basal RNA polymerase II transcription machinery. It is composed of mobile elements that move relative to each other. Component of RNA polymerases IV and V which mediate short-interfering RNAs (siRNA) accumulation and subsequent RNA-directed DNA methylation-dependent (RdDM) transcriptional gene silencing (TGS) of endogenous repeated sequences, including transposable elements. The chain is DNA-directed RNA polymerases II, IV and V subunit 10 (NRPB10) from Arabidopsis thaliana (Mouse-ear cress).